Here is a 335-residue protein sequence, read N- to C-terminus: Glycerol-3-phosphate dehydrogenase [NAD(P)+] (335 aa).

Residues Ser15, Tyr16, His36, and Lys110 each contribute to the NADPH site. The sn-glycerol 3-phosphate site is built by Lys110, Gly139, and Thr141. Position 143 (Ala143) interacts with NADPH. 5 residues coordinate sn-glycerol 3-phosphate: Lys195, Asp248, Ser258, Arg259, and Asn260. Lys195 serves as the catalytic Proton acceptor. Arg259 contributes to the NADPH binding site. NADPH-binding residues include Val283 and Glu285.

The protein belongs to the NAD-dependent glycerol-3-phosphate dehydrogenase family.

The protein resides in the cytoplasm. The catalysed reaction is sn-glycerol 3-phosphate + NAD(+) = dihydroxyacetone phosphate + NADH + H(+). It catalyses the reaction sn-glycerol 3-phosphate + NADP(+) = dihydroxyacetone phosphate + NADPH + H(+). It participates in membrane lipid metabolism; glycerophospholipid metabolism. In terms of biological role, catalyzes the reduction of the glycolytic intermediate dihydroxyacetone phosphate (DHAP) to sn-glycerol 3-phosphate (G3P), the key precursor for phospholipid synthesis. In Haemophilus influenzae (strain ATCC 51907 / DSM 11121 / KW20 / Rd), this protein is Glycerol-3-phosphate dehydrogenase [NAD(P)+].